Here is a 298-residue protein sequence, read N- to C-terminus: Leucine-rich repeat-containing protein 55 (298 aa).

A signal peptide spans 1–34 (MGDTWAQLPWPGPPHSALLLVFFLLAAGVMHSDA). The LRRNT domain maps to 35–65 (GASCPVLCTCRNQVVDCSNQRLFSVPPDLPM). Cystine bridges form between C38–C44 and C42–C51. LRR repeat units lie at residues 66–87 (DTRNLSLAHNRIAAVPPGYLTC), 90–111 (ELRVLDLRNNSLMELPPGLFLH), 114–135 (RLAHLDLSYNNLSHVPADMFRE), 138–160 (GLVHIDLSHNPWLRRVHPQAFQG), and 163–186 (HLRDLDLSYGGLAFLSLEALEGLP). Residues 196 to 251 (NPWVCGCTMEPLLKWLRNRIQRCTADSQLAECRGPPEVEGAPLFSLTEESFKACHL) form the LRRCT domain. Intrachain disulfides connect C200/C227 and C202/C249. Residues 259–279 (LFIAFVGFVVSIASVATNFLL) form a helical membrane-spanning segment.

Interacts with KCNMA1.

It localises to the cell membrane. Its function is as follows. Auxiliary protein of the large-conductance, voltage and calcium-activated potassium channel (BK alpha). Modulates gating properties by producing a marked shift in the BK channel's voltage dependence of activation in the hyperpolarizing direction, and in the absence of calcium. This chain is Leucine-rich repeat-containing protein 55 (Lrrc55), found in Rattus norvegicus (Rat).